A 135-amino-acid polypeptide reads, in one-letter code: MARPPKERRVEYIPEIRYFKPAGIPARDIKEVNLSIEEVEAIRLKDLEGLTQEECARKMEVSRPTFQRVLTGAREKIARALIEGKALRFEGGDYKLAKLHVKCHRCGNKFEVPFHHRHRFSRRFCPECDDEKNEE.

Belongs to the UPF0251 family.

The polypeptide is UPF0251 protein Hore_18270 (Halothermothrix orenii (strain H 168 / OCM 544 / DSM 9562)).